Consider the following 1000-residue polypeptide: Putative methyl-accepting chemotaxis protein sll0041 (1000 aa).

The interval 1–59 (MTQNPSSDRRPDTAQSVANGETLDGALFTGLTDTAAAQDESSETSASFATIDGEDKSEV) is disordered. GAF domains follow at residues 342-478 (EIQG…QTTL) and 509-650 (NSEQ…GLAL). One can recognise an HAMP domain in the interval 671 to 722 (EKMQKRALELLMEVDPVSRGDLTIRAHVTEDEIGTIADSYNATIESLRRIVT). One can recognise a Methyl-accepting transducer domain in the interval 727 to 963 (AASQFTETTD…SVTQTMALVA (237 aa)).

This sequence belongs to the methyl-accepting chemotaxis (MCP) protein family.

This chain is Putative methyl-accepting chemotaxis protein sll0041, found in Synechocystis sp. (strain ATCC 27184 / PCC 6803 / Kazusa).